A 292-amino-acid chain; its full sequence is Cytidine deaminase (292 aa).

2 consecutive CMP/dCMP-type deaminase domains span residues 47-167 (TTLK…FGPK) and 186-292 (DHQD…YYSL). 88–90 (NQE) is a substrate binding site. A Zn(2+)-binding site is contributed by H101. Residue E103 is the Proton donor of the active site. 2 residues coordinate Zn(2+): C128 and C131.

The protein belongs to the cytidine and deoxycytidylate deaminase family. In terms of assembly, homodimer. The cofactor is Zn(2+).

It carries out the reaction cytidine + H2O + H(+) = uridine + NH4(+). It catalyses the reaction 2'-deoxycytidine + H2O + H(+) = 2'-deoxyuridine + NH4(+). Its function is as follows. This enzyme scavenges exogenous and endogenous cytidine and 2'-deoxycytidine for UMP synthesis. This is Cytidine deaminase from Haemophilus influenzae (strain ATCC 51907 / DSM 11121 / KW20 / Rd).